We begin with the raw amino-acid sequence, 160 residues long: Negative modulator of initiation of replication (160 aa).

This sequence belongs to the SeqA family. Homodimer. Polymerizes to form helical filaments.

It is found in the cytoplasm. Its function is as follows. Negative regulator of replication initiation, which contributes to regulation of DNA replication and ensures that replication initiation occurs exactly once per chromosome per cell cycle. Binds to pairs of hemimethylated GATC sequences in the oriC region, thus preventing assembly of replication proteins and re-initiation at newly replicated origins. Repression is relieved when the region becomes fully methylated. The polypeptide is Negative modulator of initiation of replication (Idiomarina loihiensis (strain ATCC BAA-735 / DSM 15497 / L2-TR)).